A 244-amino-acid polypeptide reads, in one-letter code: Carboxy-S-adenosyl-L-methionine synthase (244 aa).

Residues Tyr40, 65 to 67, 90 to 91, 119 to 120, Asn134, and Arg201 each bind S-adenosyl-L-methionine; these read GCS, DN, and DI.

The protein belongs to the class I-like SAM-binding methyltransferase superfamily. Cx-SAM synthase family. Homodimer.

The enzyme catalyses prephenate + S-adenosyl-L-methionine = carboxy-S-adenosyl-L-methionine + 3-phenylpyruvate + H2O. In terms of biological role, catalyzes the conversion of S-adenosyl-L-methionine (SAM) to carboxy-S-adenosyl-L-methionine (Cx-SAM). The protein is Carboxy-S-adenosyl-L-methionine synthase of Geobacter sp. (strain M21).